Reading from the N-terminus, the 1388-residue chain is DNA-directed RNA polymerase subunit beta (1388 aa).

This sequence belongs to the RNA polymerase beta chain family. In terms of assembly, the RNAP catalytic core consists of 2 alpha, 1 beta, 1 beta' and 1 omega subunit. When a sigma factor is associated with the core the holoenzyme is formed, which can initiate transcription.

It carries out the reaction RNA(n) + a ribonucleoside 5'-triphosphate = RNA(n+1) + diphosphate. Its function is as follows. DNA-dependent RNA polymerase catalyzes the transcription of DNA into RNA using the four ribonucleoside triphosphates as substrates. The sequence is that of DNA-directed RNA polymerase subunit beta from Xylella fastidiosa (strain 9a5c).